Reading from the N-terminus, the 734-residue chain is Transcription factor EMB1444 (734 aa).

Positions 537–566 (QFPTSLEIPKKNKKRAKPGESSRPRPRDRQ) are disordered. Residues 548–555 (NKKRAKPG) carry the Nuclear localization signal motif. Residues 552–601 (AKPGESSRPRPRDRQLIQDRIKELRELVPNGSKCSIDSLLECTIKHMLFL) enclose the bHLH domain. The span at 553–566 (KPGESSRPRPRDRQ) shows a compositional bias: basic and acidic residues.

This sequence belongs to the bHLH protein family. LHW subfamily. In terms of assembly, homodimer.

It localises to the nucleus. Its function is as follows. Transcription factor that may regulate root development. In Arabidopsis thaliana (Mouse-ear cress), this protein is Transcription factor EMB1444.